The sequence spans 280 residues: Ycf3-interacting protein 1, chloroplastic (280 aa).

The transit peptide at 1–62 (MTTQIFQLPL…NNRRFGSLIV (62 aa)) directs the protein to the chloroplast. Positions 75–103 (PVPLTLEQQEKEKQNRDDEEDEIDEGDVD) are disordered. Residues 91-103 (DDEEDEIDEGDVD) show a composition bias toward acidic residues. Residues 255 to 275 (ALYFVSALPVIIGISVVLILF) traverse the membrane as a helical segment.

This sequence belongs to the Y3IP1/CEST family. Interacts with Ycf3. In terms of tissue distribution, expressed in cotyledons, rosette and cauline leaves, stems and sepals.

The protein resides in the plastid. The protein localises to the chloroplast thylakoid membrane. Nuclear genome-encoded factor that participates in photosystem I (PSI) biogenesis. Cooperates with the plastid genome-encoded protein PSI assembly Ycf3 in the assembly of stable PSI units in the thylakoid membrane. Involved in light-induced chloroplast development and growth. Involved in the plant response to abiotic and photooxidative stresses. May be involved in the suppression of photooxidative damage. The sequence is that of Ycf3-interacting protein 1, chloroplastic from Arabidopsis thaliana (Mouse-ear cress).